The chain runs to 159 residues: Protein Smg homolog (159 aa).

Belongs to the Smg family.

In Vibrio campbellii (strain ATCC BAA-1116), this protein is Protein Smg homolog.